A 256-amino-acid chain; its full sequence is Ribosomal RNA small subunit methyltransferase A (256 aa).

Residues His-12, Leu-14, Gly-39, Glu-60, Asp-83, and Asn-101 each contribute to the S-adenosyl-L-methionine site.

The protein belongs to the class I-like SAM-binding methyltransferase superfamily. rRNA adenine N(6)-methyltransferase family. RsmA subfamily.

The protein localises to the cytoplasm. The enzyme catalyses adenosine(1518)/adenosine(1519) in 16S rRNA + 4 S-adenosyl-L-methionine = N(6)-dimethyladenosine(1518)/N(6)-dimethyladenosine(1519) in 16S rRNA + 4 S-adenosyl-L-homocysteine + 4 H(+). Functionally, specifically dimethylates two adjacent adenosines (A1518 and A1519) in the loop of a conserved hairpin near the 3'-end of 16S rRNA in the 30S particle. May play a critical role in biogenesis of 30S subunits. The polypeptide is Ribosomal RNA small subunit methyltransferase A (Nitrosomonas eutropha (strain DSM 101675 / C91 / Nm57)).